A 98-amino-acid polypeptide reads, in one-letter code: NADH-ubiquinone oxidoreductase chain 4L (98 aa).

3 helical membrane-spanning segments follow: residues 1-21 (MSLI…GLLM), 29-49 (SLLC…MMVL), and 61-81 (IILL…LVMI).

The protein belongs to the complex I subunit 4L family. Core subunit of respiratory chain NADH dehydrogenase (Complex I) which is composed of 45 different subunits.

The protein localises to the mitochondrion inner membrane. The enzyme catalyses a ubiquinone + NADH + 5 H(+)(in) = a ubiquinol + NAD(+) + 4 H(+)(out). Functionally, core subunit of the mitochondrial membrane respiratory chain NADH dehydrogenase (Complex I) which catalyzes electron transfer from NADH through the respiratory chain, using ubiquinone as an electron acceptor. Part of the enzyme membrane arm which is embedded in the lipid bilayer and involved in proton translocation. The polypeptide is NADH-ubiquinone oxidoreductase chain 4L (MT-ND4L) (Ceratotherium simum (White rhinoceros)).